A 416-amino-acid polypeptide reads, in one-letter code: UDP-N-acetylglucosamine 1-carboxyvinyltransferase (416 aa).

Residue 22-23 (KN) participates in phosphoenolpyruvate binding. UDP-N-acetyl-alpha-D-glucosamine is bound at residue R92. C116 functions as the Proton donor in the catalytic mechanism. Position 116 is a 2-(S-cysteinyl)pyruvic acid O-phosphothioketal (C116). Residues 121–125 (RPVDQ), D304, and I326 contribute to the UDP-N-acetyl-alpha-D-glucosamine site.

This sequence belongs to the EPSP synthase family. MurA subfamily.

Its subcellular location is the cytoplasm. The enzyme catalyses phosphoenolpyruvate + UDP-N-acetyl-alpha-D-glucosamine = UDP-N-acetyl-3-O-(1-carboxyvinyl)-alpha-D-glucosamine + phosphate. It participates in cell wall biogenesis; peptidoglycan biosynthesis. Functionally, cell wall formation. Adds enolpyruvyl to UDP-N-acetylglucosamine. This chain is UDP-N-acetylglucosamine 1-carboxyvinyltransferase, found in Cupriavidus pinatubonensis (strain JMP 134 / LMG 1197) (Cupriavidus necator (strain JMP 134)).